Reading from the N-terminus, the 449-residue chain is C4-dicarboxylate transport protein 1 (449 aa).

A run of 8 helical transmembrane segments spans residues 16–38, 53–71, 84–106, 157–176, 197–219, 229–251, 311–333, and 358–380; these read FLQVVIGLVIGVICGVGIPDLAV, MLIALIVFCVVVNGISGAG, VIYFEILTTIALVLGLVVAYSLG, ILQVLLFSVLFGSALNLVGE, GMIVRLAPLGVFGAVAFTTARYG, LVLVFYATCLVFVMAVLGSVLRL, GFSIYLTLAVVFIAHVTGTPLAM, and LVILAATLTAVPAIPVAGLVLVL.

The protein belongs to the dicarboxylate/amino acid:cation symporter (DAACS) (TC 2.A.23) family.

Its subcellular location is the cell inner membrane. In terms of biological role, responsible for the transport of dicarboxylates such as succinate, fumarate, and malate from the periplasm across the membrane. In Pseudomonas aeruginosa (strain ATCC 15692 / DSM 22644 / CIP 104116 / JCM 14847 / LMG 12228 / 1C / PRS 101 / PAO1), this protein is C4-dicarboxylate transport protein 1 (dctA1).